Reading from the N-terminus, the 910-residue chain is DNA mismatch repair protein MutS (910 aa).

An ATP-binding site is contributed by G658–S665.

It belongs to the DNA mismatch repair MutS family.

In terms of biological role, this protein is involved in the repair of mismatches in DNA. It is possible that it carries out the mismatch recognition step. This protein has a weak ATPase activity. The protein is DNA mismatch repair protein MutS of Brucella anthropi (strain ATCC 49188 / DSM 6882 / CCUG 24695 / JCM 21032 / LMG 3331 / NBRC 15819 / NCTC 12168 / Alc 37) (Ochrobactrum anthropi).